A 514-amino-acid chain; its full sequence is ATP synthase subunit alpha (514 aa).

170-177 contributes to the ATP binding site; the sequence is GDRQTGKT.

The protein belongs to the ATPase alpha/beta chains family. As to quaternary structure, F-type ATPases have 2 components, CF(1) - the catalytic core - and CF(0) - the membrane proton channel. CF(1) has five subunits: alpha(3), beta(3), gamma(1), delta(1), epsilon(1). CF(0) has three main subunits: a(1), b(2) and c(9-12). The alpha and beta chains form an alternating ring which encloses part of the gamma chain. CF(1) is attached to CF(0) by a central stalk formed by the gamma and epsilon chains, while a peripheral stalk is formed by the delta and b chains.

It localises to the cell inner membrane. It catalyses the reaction ATP + H2O + 4 H(+)(in) = ADP + phosphate + 5 H(+)(out). Functionally, produces ATP from ADP in the presence of a proton gradient across the membrane. The alpha chain is a regulatory subunit. This Acinetobacter baumannii (strain AB307-0294) protein is ATP synthase subunit alpha.